Reading from the N-terminus, the 424-residue chain is Protein CLP1 homolog 5 (424 aa).

Residues glutamate 16, threonine 56, and 124-129 (DSGKST) each bind ATP.

It belongs to the Clp1 family. Clp1 subfamily. As to quaternary structure, forms a complex with cleavage and polyadenylation specificity factor (CPSF) subunits PCFS1, FIPS3 and CPSF30.

It localises to the nucleus. In terms of biological role, required for endonucleolytic cleavage during polyadenylation-dependent pre-mRNA 3'-end formation. This Arabidopsis thaliana (Mouse-ear cress) protein is Protein CLP1 homolog 5.